We begin with the raw amino-acid sequence, 105 residues long: Nitrogen fixation nifHD region glnB-like protein 1 (105 aa).

Belongs to the P(II) protein family.

Functionally, could be involved in the regulation of nitrogen fixation. The protein is Nitrogen fixation nifHD region glnB-like protein 1 (glnBI) of Methanococcus maripaludis (strain DSM 14266 / JCM 13030 / NBRC 101832 / S2 / LL).